The chain runs to 20 residues: Conotoxin PnMLKM-D0211 (20 aa).

Positions 1–3 (VKR) are excised as a propeptide. Cystine bridges form between cysteine 4–cysteine 18, cysteine 5–cysteine 14, and cysteine 10–cysteine 17. Proline 16 is subject to 4-hydroxyproline. Tryptophan 19 is modified (tryptophan amide).

The protein belongs to the conotoxin M superfamily. In terms of tissue distribution, expressed by the venom duct.

Its subcellular location is the secreted. This chain is Conotoxin PnMLKM-D0211, found in Conus pennaceus (Feathered cone).